The sequence spans 105 residues: Large ribosomal subunit protein uL24 (105 aa).

The protein belongs to the universal ribosomal protein uL24 family. In terms of assembly, part of the 50S ribosomal subunit.

Its function is as follows. One of two assembly initiator proteins, it binds directly to the 5'-end of the 23S rRNA, where it nucleates assembly of the 50S subunit. In terms of biological role, one of the proteins that surrounds the polypeptide exit tunnel on the outside of the subunit. In Staphylococcus aureus (strain Mu3 / ATCC 700698), this protein is Large ribosomal subunit protein uL24.